Reading from the N-terminus, the 436-residue chain is Cold sensitive U2 snRNA suppressor 1 (436 aa).

Residues 1–10 show a composition bias toward basic residues; sequence MARTKSRKRS. The tract at residues 1–22 is disordered; that stretch reads MARTKSRKRSGNNQNKNASVVN. A compositionally biased stretch (low complexity) spans 12–22; that stretch reads NNQNKNASVVN. Phosphothreonine occurs at positions 104 and 112. Ser114 is modified (phosphoserine). The interval 374 to 436 is disordered; that stretch reads EFENSKEDTQ…SEKQLYTVLK (63 aa). The span at 389-408 shows a compositional bias: basic and acidic residues; sequence GRQDDKIDDEVEHKLDHFQE.

It to mammalian SAP 145. Some, to C.elegans ZK632.11. As to quaternary structure, belongs to the CWC complex (or CEF1-associated complex), a spliceosome sub-complex reminiscent of a late-stage spliceosome composed of the U2, U5 and U6 snRNAs and at least BUD13, BUD31, BRR2, CDC40, CEF1, CLF1, CUS1, CWC2, CWC15, CWC21, CWC22, CWC23, CWC24, CWC25, CWC27, ECM2, HSH155, IST3, ISY1, LEA1, MSL1, NTC20, PRP8, PRP9, PRP11, PRP19, PRP21, PRP22, PRP45, PRP46, SLU7, SMB1, SMD1, SMD2, SMD3, SMX2, SMX3, SNT309, SNU114, SPP2, SYF1, SYF2, RSE1 and YJU2. Interacts with RDS3.

It is found in the nucleus. Functionally, essential splicing protein required for U2 snRNP binding to pre-mRNA during spliceosome assembly. This chain is Cold sensitive U2 snRNA suppressor 1 (CUS1), found in Saccharomyces cerevisiae (strain ATCC 204508 / S288c) (Baker's yeast).